Here is a 429-residue protein sequence, read N- to C-terminus: 3-phosphoshikimate 1-carboxyvinyltransferase (429 aa).

3-phosphoshikimate contacts are provided by K21, S22, and R26. K21 contributes to the phosphoenolpyruvate binding site. Phosphoenolpyruvate contacts are provided by G94 and R122. Positions 167, 169, 315, and 342 each coordinate 3-phosphoshikimate. Q169 lines the phosphoenolpyruvate pocket. The Proton acceptor role is filled by D315. Residues R346 and R388 each contribute to the phosphoenolpyruvate site.

Belongs to the EPSP synthase family. As to quaternary structure, monomer.

Its subcellular location is the cytoplasm. It catalyses the reaction 3-phosphoshikimate + phosphoenolpyruvate = 5-O-(1-carboxyvinyl)-3-phosphoshikimate + phosphate. The protein operates within metabolic intermediate biosynthesis; chorismate biosynthesis; chorismate from D-erythrose 4-phosphate and phosphoenolpyruvate: step 6/7. Functionally, catalyzes the transfer of the enolpyruvyl moiety of phosphoenolpyruvate (PEP) to the 5-hydroxyl of shikimate-3-phosphate (S3P) to produce enolpyruvyl shikimate-3-phosphate and inorganic phosphate. In Desulforamulus reducens (strain ATCC BAA-1160 / DSM 100696 / MI-1) (Desulfotomaculum reducens), this protein is 3-phosphoshikimate 1-carboxyvinyltransferase.